The chain runs to 421 residues: UDP-N-acetylglucosamine 1-carboxyvinyltransferase (421 aa).

22-23 contributes to the phosphoenolpyruvate binding site; that stretch reads KN. Arg92 is a binding site for UDP-N-acetyl-alpha-D-glucosamine. The active-site Proton donor is the Cys116. Position 116 is a 2-(S-cysteinyl)pyruvic acid O-phosphothioketal (Cys116). The UDP-N-acetyl-alpha-D-glucosamine site is built by Asp306 and Val328.

Belongs to the EPSP synthase family. MurA subfamily.

It localises to the cytoplasm. The enzyme catalyses phosphoenolpyruvate + UDP-N-acetyl-alpha-D-glucosamine = UDP-N-acetyl-3-O-(1-carboxyvinyl)-alpha-D-glucosamine + phosphate. Its pathway is cell wall biogenesis; peptidoglycan biosynthesis. Functionally, cell wall formation. Adds enolpyruvyl to UDP-N-acetylglucosamine. In Thermotoga maritima (strain ATCC 43589 / DSM 3109 / JCM 10099 / NBRC 100826 / MSB8), this protein is UDP-N-acetylglucosamine 1-carboxyvinyltransferase.